The sequence spans 367 residues: MTSSAPLILLAAGGTGGHLFPAEALGVELIKRGYRVRLVTDARALRYSGLFTKDMIDVVPSETVRSRSPVALARTALLLGTGTLAAFNLMRRLKPAAVIGFGGYPTVPPLLAARLAGVPSLIHDANAVLGRANRFLSAHVKAIATSLPGVLDRDPALSGKTTTVGTPMRPAILEAAAVPYAAPETAGPLRLLVVGGSQGARVMSDVVPGAIERLEPALWSRLVLTQQVRQEDMARVRAVYDRLKINAELQPFFTDLPARLAANHLVISRSGAGTVAELAAIGRPSILVPLPGAIDQDQYANAGVLSDANAAIRIVQSDFTSDRLASEISALAAEPVRLAAMAQAARAAGRLDAAERLADLVIKTAGL.

UDP-N-acetyl-alpha-D-glucosamine-binding positions include threonine 15 to glycine 17, asparagine 126, arginine 169, serine 197, and glutamine 298.

It belongs to the glycosyltransferase 28 family. MurG subfamily.

Its subcellular location is the cell inner membrane. The enzyme catalyses di-trans,octa-cis-undecaprenyl diphospho-N-acetyl-alpha-D-muramoyl-L-alanyl-D-glutamyl-meso-2,6-diaminopimeloyl-D-alanyl-D-alanine + UDP-N-acetyl-alpha-D-glucosamine = di-trans,octa-cis-undecaprenyl diphospho-[N-acetyl-alpha-D-glucosaminyl-(1-&gt;4)]-N-acetyl-alpha-D-muramoyl-L-alanyl-D-glutamyl-meso-2,6-diaminopimeloyl-D-alanyl-D-alanine + UDP + H(+). The protein operates within cell wall biogenesis; peptidoglycan biosynthesis. Cell wall formation. Catalyzes the transfer of a GlcNAc subunit on undecaprenyl-pyrophosphoryl-MurNAc-pentapeptide (lipid intermediate I) to form undecaprenyl-pyrophosphoryl-MurNAc-(pentapeptide)GlcNAc (lipid intermediate II). The sequence is that of UDP-N-acetylglucosamine--N-acetylmuramyl-(pentapeptide) pyrophosphoryl-undecaprenol N-acetylglucosamine transferase from Bradyrhizobium sp. (strain BTAi1 / ATCC BAA-1182).